Consider the following 409-residue polypeptide: uncharacterized protein (409 aa).

Disordered stretches follow at residues 12–32, 133–160, and 194–213; these read ENTE…LHCP, EVST…SREQ, and TVSS…GLST. Over residues 134–160 the composition is skewed to polar residues; sequence VSTQKSWSSEKNWSGLSQGPGTASREQ.

This is an uncharacterized protein from Mus musculus (Mouse).